A 441-amino-acid chain; its full sequence is 2-oxoisovalerate dehydrogenase subunit alpha, mitochondrial (441 aa).

The N-terminal 17 residues, 1-17, are a transit peptide targeting the mitochondrion; the sequence is MISQSYRILSRISRNNE. Position 145 to 147 (145 to 147) interacts with thiamine diphosphate; sequence QYR. Positions 194, 199, and 200 each coordinate K(+).

It belongs to the BCKDHA family. As to quaternary structure, heterotetramer of alpha and beta chains. Requires thiamine diphosphate as cofactor.

Its subcellular location is the mitochondrion matrix. The enzyme catalyses N(6)-[(R)-lipoyl]-L-lysyl-[protein] + 3-methyl-2-oxobutanoate + H(+) = N(6)-[(R)-S(8)-2-methylpropanoyldihydrolipoyl]-L-lysyl-[protein] + CO2. The branched-chain alpha-keto dehydrogenase complex catalyzes the overall conversion of alpha-keto acids to acyl-CoA and CO(2). It contains multiple copies of three enzymatic components: branched-chain alpha-keto acid decarboxylase (E1), lipoamide acyltransferase (E2) and lipoamide dehydrogenase (E3). In Dictyostelium discoideum (Social amoeba), this protein is 2-oxoisovalerate dehydrogenase subunit alpha, mitochondrial (bkdA).